The sequence spans 317 residues: Neurogenic differentiation factor 6-B (317 aa).

2 disordered regions span residues 1-90 (MLTV…ERSR) and 297-317 (DLHP…GYHN). Positions 37-56 (EAEDDNTDREEEEEREEDEN) are enriched in acidic residues. Basic residues predominate over residues 59–69 (PKKKGPRKKKS). The Nuclear localization signal motif lies at 65–70 (RKKKSE). The span at 70–90 (EGRGDRVKMRRQEANARERSR) shows a compositional bias: basic and acidic residues. Positions 78–130 (MRRQEANARERSRMHGLNDALESLRKVVPCYSKTQKLSKIETLRLAKNYIWAL) constitute a bHLH domain. Residues 301 to 317 (RSQSFQSQDELNTGYHN) show a composition bias toward polar residues.

As to quaternary structure, efficient DNA binding requires dimerization with another bHLH protein. Embryonic olfactory bulbs and olfactory placodes. In adult, expressed in brain and eye.

The protein localises to the nucleus. Differentiation factor required for neurogenesis. Does not act as an upstream activator of isl1. This chain is Neurogenic differentiation factor 6-B, found in Danio rerio (Zebrafish).